The following is a 95-amino-acid chain: Small ribosomal subunit protein uS19 (95 aa).

This sequence belongs to the universal ribosomal protein uS19 family.

In terms of biological role, protein S19 forms a complex with S13 that binds strongly to the 16S ribosomal RNA. In Chloroflexus aurantiacus (strain ATCC 29366 / DSM 635 / J-10-fl), this protein is Small ribosomal subunit protein uS19.